Reading from the N-terminus, the 182-residue chain is Large ribosomal subunit protein uL10 (182 aa).

This sequence belongs to the universal ribosomal protein uL10 family. As to quaternary structure, part of the ribosomal stalk of the 50S ribosomal subunit. The N-terminus interacts with L11 and the large rRNA to form the base of the stalk. The C-terminus forms an elongated spine to which L12 dimers bind in a sequential fashion forming a multimeric L10(L12)X complex.

Functionally, forms part of the ribosomal stalk, playing a central role in the interaction of the ribosome with GTP-bound translation factors. The protein is Large ribosomal subunit protein uL10 of Chloroflexus aurantiacus (strain ATCC 29364 / DSM 637 / Y-400-fl).